The sequence spans 171 residues: 3-hydroxydecanoyl-[acyl-carrier-protein] dehydratase (171 aa).

The active site involves histidine 70.

Belongs to the thioester dehydratase family. FabA subfamily. In terms of assembly, homodimer.

The protein localises to the cytoplasm. The catalysed reaction is a (3R)-hydroxyacyl-[ACP] = a (2E)-enoyl-[ACP] + H2O. It catalyses the reaction (3R)-hydroxydecanoyl-[ACP] = (2E)-decenoyl-[ACP] + H2O. It carries out the reaction (2E)-decenoyl-[ACP] = (3Z)-decenoyl-[ACP]. It functions in the pathway lipid metabolism; fatty acid biosynthesis. In terms of biological role, necessary for the introduction of cis unsaturation into fatty acids. Catalyzes the dehydration of (3R)-3-hydroxydecanoyl-ACP to E-(2)-decenoyl-ACP and then its isomerization to Z-(3)-decenoyl-ACP. Can catalyze the dehydratase reaction for beta-hydroxyacyl-ACPs with saturated chain lengths up to 16:0, being most active on intermediate chain length. The sequence is that of 3-hydroxydecanoyl-[acyl-carrier-protein] dehydratase from Vibrio campbellii (strain ATCC BAA-1116).